Reading from the N-terminus, the 548-residue chain is Tylosin resistance ATP-binding protein TlrC (548 aa).

2 ABC transporter domains span residues 9-265 (LSLH…RRRQ) and 347-547 (IATA…VSGA). ATP-binding positions include 41–48 (GDNGAGKS) and 387–394 (GPNGAGKS).

The protein belongs to the ABC transporter superfamily.

Its subcellular location is the cell membrane. Its function is as follows. Responsible for tylosin resistance, and is proposed to be a subunit of a multicomponent export system for the energy-dependent efflux of tylosin. In Streptomyces fradiae (Streptomyces roseoflavus), this protein is Tylosin resistance ATP-binding protein TlrC (tlrC).